Reading from the N-terminus, the 622-residue chain is Threonine--tRNA ligase (622 aa).

The segment at 1 to 136 (MKTLLIHSDY…PLSELSRKIT (136 aa)) is editing domain. Residues 199 to 498 (PHVKYIKEKE…TLENKPPALP (300 aa)) are catalytic. Zn(2+) is bound by residues Cys-291, His-343, and His-467.

Belongs to the class-II aminoacyl-tRNA synthetase family. As to quaternary structure, homodimer. The cofactor is Zn(2+).

It is found in the cytoplasm. The enzyme catalyses tRNA(Thr) + L-threonine + ATP = L-threonyl-tRNA(Thr) + AMP + diphosphate + H(+). Its function is as follows. Catalyzes the attachment of threonine to tRNA(Thr) in a two-step reaction: L-threonine is first activated by ATP to form Thr-AMP and then transferred to the acceptor end of tRNA(Thr). Also edits incorrectly charged L-seryl-tRNA(Thr). The chain is Threonine--tRNA ligase from Methanococcus maripaludis (strain DSM 14266 / JCM 13030 / NBRC 101832 / S2 / LL).